A 1775-amino-acid chain; its full sequence is MKKKFSIVIISVLLLGYLAPFDTLLVGADETTVTEDTTVKTAETETATEATESESGSDNEKAEEPKEAEASKETTEKEEKAKTKEPASNIKTEINTDKSQLKQTNLKAVVPAGSTYNSLFPDDNLAKKLAVIITGNAAATGNESVDSAALLAISQLDLSGETGNDPTDISNIEGLQYLENLTSLNLSENNISDLAPIKDLVNLVSLNLSSNRTLVNLSGVEGLVNLQELNVSANKALEDISQVAALPVLKEISAQGCNIKTLELDNPAGAILPELETFYLQENDLTDLTSLAKLPKLKNLYIKGNASLKSLATLKGATKLQLIDASNCTDLETLGDISGLSELEMIQLSGCSKLKEITSLKDLPNLVNITADSCAIEDLGTLNNLPKLQTLILSDNKDLTNINAITDMPQLKTLALDGCGITSIGTLDNLPKLEKLDLKENQLTSISEINDLPRLSYLDVSVNYLTTIGELKKLPLLEWLNVSSNRLSDVSTLTNFPSLNYINVSNNVIRTVGKMTELPSLKEFYAQNNNVSDISMIHDMPNLRKVDASNNLITNIGTFDNLPKLQNLDVHSNRITNTSVIHDLPSLETFYAQNNLITNIGTMDNLPELTYVDLSFNRIPSLAPIGDLPKLEILKVTDNYSYLRSLGTMDGVSKLRNLELQNNYLNYTGTEGNLSALSDLTNLTELNLRDNGYISDISGLSTLSRLIYLNLDSNKIKDISALSNLTTLQELTLENNQIEDISALSDLDNLNKLALSKNKIIDISPAANMVNRGASVTASNQTYTLPTVLSYQSSFTIDNPVVWYDGTPLAPSSIAHSGTYKDGEITWTNMTAASSSTEFNFNRLKDGLTFSGTITQPYKSAVKVTANAEQTYTIGDTISEEQFLKDVNAKSSDGAPVTSDFATVVDLNTFGEYEVTLTSEKDGIQGDSCKVIVKVLHGAPVISADQTINYDKHATITEKQFLEDVHASTDLNTAITTNFSTAVNLNKGGDYTVALNSENEDGVKAETVYVTVTVDKDPAPIISAKTDITYDKFSKKTEAAFLDDIDADTNDGSIITSNFATAVNLDKAGDYTVTLNSINSDGVASTPTAIIVHVEKEKIATISANTAQQYEKYAEINETQFLKDVHASINASPTTAVLESDFETVVKLDVPGTYTVTITATNEDGGVSAPKEVSVIVKKLPAPEITADKEITYPKFDEVSEAEFLSDIHATINEKNVTITSNFSADVNLNKAGDYTVTLNATNEDGVKATPVEVIVHVQQGERPVITADATISYDKFANITEAKFLEDIHATSSDGQSSTVITSNFETATNFKTAMSYTVTLNAVNEDGISAEPVAVTVTINKEPAATLKADAEVSYAKNEAVTESDFFKDVHLEGAEAPSTAKATSNFDSVVDRSKTGDYTVTINATNEDGAVSTPIEVIVHIGAESAPVITANAEVKYNKHEQTDERRFLYDSDAKIDEANVEIKTDFAEKVDINKVGTYTVTLTATNEDGQAANPVEVSVIVSDAAAEKVNVKYVDENGAEISAAETLTGNLDDAFSIDAKSIAGYKCDATLSGVFSTVEQTVVFHYKAIEPGVVTIKYEDANGKAVAEDKQITGEVGDDFEAEAQTVSGYSCRAIASGKITEEPQTITFTYTTATPSKKSGEITVQYVDESGKKLADSKKVTGDIDDSYSVEAKAIDGYSVVGDDSAKGVFTEKSQTVTFKYKKNTQVSKDEPKVKGKTNQPPSADTKLKVDNNTLPATGDTENMALAVLIGFNMLLVASIFLFRKPKTNQ.

An N-terminal signal peptide occupies residues methionine 1–alanine 28. The span at aspartate 36–alanine 50 shows a compositional bias: low complexity. The tract at residues aspartate 36–aspartate 97 is disordered. The segment covering aspartate 58–glutamate 85 has biased composition (basic and acidic residues). 27 LRR repeats span residues alanine 152–glutamine 176, asparagine 180–valine 201, asparagine 202–valine 224, asparagine 225–proline 247, valine 248–glycine 269, glutamate 274–proline 295, lysine 296–threonine 318, lysine 319–serine 341, glutamate 342–proline 364, asparagine 365–proline 386, lysine 387–proline 409, glutamine 410–proline 431, lysine 432–proline 453, arginine 454–proline 475, leucine 476–proline 497, serine 498–proline 519, serine 520–proline 541, asparagine 542–proline 563, lysine 564–proline 585, serine 586–proline 607, glutamate 608–proline 629, lysine 630–aspartate 650, lysine 654–serine 675, asparagine 682–serine 704, arginine 705–threonine 726, threonine 727–aspartate 748, and asparagine 749–valine 770. Residues threonine 782–glutamate 869 enclose the LRRCT domain. MucBP domains lie at aspartate 1507–valine 1566, alanine 1572–isoleucine 1631, and serine 1641–valine 1702. The tract at residues serine 1713–asparagine 1737 is disordered. The short motif at leucine 1740 to glycine 1744 is the LPXTG sorting signal element. A Pentaglycyl murein peptidoglycan amidated threonine modification is found at threonine 1743. A propeptide spans glycine 1744 to glutamine 1775 (removed by sortase).

Belongs to the internalin family.

Its subcellular location is the secreted. It localises to the cell wall. In terms of biological role, a role in virulence could not be demonstrated. The sequence is that of Internalin I (inlI) from Listeria monocytogenes serotype 4b (strain F2365).